The primary structure comprises 366 residues: tRNA 2-selenouridine synthase (366 aa).

The region spanning 14 to 137 (LLENRPLIDV…IRSFLINTIE (124 aa)) is the Rhodanese domain. The active-site S-selanylcysteine intermediate is the Cys-97.

Belongs to the SelU family. As to quaternary structure, monomer.

The enzyme catalyses 5-methylaminomethyl-2-thiouridine(34) in tRNA + selenophosphate + (2E)-geranyl diphosphate + H2O + H(+) = 5-methylaminomethyl-2-selenouridine(34) in tRNA + (2E)-thiogeraniol + phosphate + diphosphate. It carries out the reaction 5-methylaminomethyl-2-thiouridine(34) in tRNA + (2E)-geranyl diphosphate = 5-methylaminomethyl-S-(2E)-geranyl-thiouridine(34) in tRNA + diphosphate. The catalysed reaction is 5-methylaminomethyl-S-(2E)-geranyl-thiouridine(34) in tRNA + selenophosphate + H(+) = 5-methylaminomethyl-2-(Se-phospho)selenouridine(34) in tRNA + (2E)-thiogeraniol. It catalyses the reaction 5-methylaminomethyl-2-(Se-phospho)selenouridine(34) in tRNA + H2O = 5-methylaminomethyl-2-selenouridine(34) in tRNA + phosphate. Functionally, involved in the post-transcriptional modification of the uridine at the wobble position (U34) of tRNA(Lys), tRNA(Glu) and tRNA(Gln). Catalyzes the conversion of 2-thiouridine (S2U-RNA) to 2-selenouridine (Se2U-RNA). Acts in a two-step process involving geranylation of 2-thiouridine (S2U) to S-geranyl-2-thiouridine (geS2U) and subsequent selenation of the latter derivative to 2-selenouridine (Se2U) in the tRNA chain. The chain is tRNA 2-selenouridine synthase from Shewanella frigidimarina (strain NCIMB 400).